A 20-amino-acid chain; its full sequence is Beta-fibrinogenase jerdofibrase (20 aa).

Residues 1–20 (VIGGDECNINEHPFLVLVYY) enclose the Peptidase S1 domain.

This sequence belongs to the peptidase S1 family. Snake venom subfamily. As to quaternary structure, monomer. In terms of tissue distribution, expressed by the venom gland.

It is found in the secreted. Inhibited by PMSF and soybean trypsin inhibitor. Partially inhibited by DTT and cysteine. Not affected by EDTA. Its function is as follows. Fibrin(ogen)olytic serine protease degrades Bbeta-chain of human fibrinogen (FGB) and shows a lower activity on Aa-chain (FGA). Also degrades fibrin directly. Releases fibrinopeptide B and a small amount of fibrinopeptide A. Has also be shown to catalyze the hydrolysis of some chromogenic substrates such as S2238, S2160, S2302 and S2251. The polypeptide is Beta-fibrinogenase jerdofibrase (Protobothrops jerdonii (Jerdon's pitviper)).